Here is a 381-residue protein sequence, read N- to C-terminus: MPFSNSHNLLKMKYSVDDEYPDLSVHNNHMAKVLTLDLYKKLRDRQTSSGFTLDDVIQTGVDNPGHPFIMTVGCVAGDEESYEVFKELFDPVIEDRHGGYKPTDEHKTDLNADNLQGGDDLDPNYVLSSRVRTGRSIRGFCLPPHCSRGERRAIEKLSVEALGSLGGDLKGKYYALRNMTDAEQQQLIDDHFLFDKPVSPLLLASGMARDWPDARGIWHNDNKTFLVWINEEDHLRVISMQKGGNMKEVFTRFCTGLTQIETLFKSKNYEFMWNPHLGYILTCPSNLGTGLRAGVHIKLPNLGKHEKFGEVLKRLRLQKRGTGGVDTAAVGGVFDVSNADRLGFSEVELVQMVVDGVKLLIEMEKRLEKGQSIDDLMPAQK.

Positions 11–98 (KMKYSVDDEY…FDPVIEDRHG (88 aa)) constitute a Phosphagen kinase N-terminal domain. V72 is a binding site for creatine. Residues 125–367 (YVLSSRVRTG…KLLIEMEKRL (243 aa)) enclose the Phosphagen kinase C-terminal domain. ATP is bound by residues 128–132 (SSRVR), R130, R132, and H191. E232 contributes to the creatine binding site. An ATP-binding site is contributed by R236. At T282 the chain carries Phosphothreonine; by autocatalysis. S285 serves as a coordination point for creatine. A Phosphoserine; by autocatalysis modification is found at S285. A Phosphothreonine; by autocatalysis modification is found at T289. ATP-binding positions include R292, R320, 320 to 325 (RGTGGV), and D335.

The protein belongs to the ATP:guanido phosphotransferase family. In terms of assembly, dimer of identical or non-identical chains, which can be either B (brain type) or M (muscle type). With MM being the major form in skeletal muscle and myocardium, MB existing in myocardium, and BB existing in many tissues, especially brain. In terms of processing, ba-CK and Bb-CK are phosphorylated. The N-terminus of BA-CK is blocked. Expressed in almost all tissues and found enriched in various region of the brain, retina, heart, gizzard, gut and sperm.

It localises to the cytoplasm. The protein resides in the cytosol. It is found in the mitochondrion. Its subcellular location is the cell membrane. The enzyme catalyses creatine + ATP = N-phosphocreatine + ADP + H(+). Reversibly catalyzes the transfer of phosphate between ATP and various phosphogens (e.g. creatine phosphate). Creatine kinase isoenzymes play a central role in energy transduction in tissues with large, fluctuating energy demands, such as skeletal muscle, heart, brain and spermatozoa. The chain is Creatine kinase B-type from Gallus gallus (Chicken).